The chain runs to 189 residues: Elongation factor P (189 aa).

This sequence belongs to the elongation factor P family.

It localises to the cytoplasm. Its pathway is protein biosynthesis; polypeptide chain elongation. Involved in peptide bond synthesis. Stimulates efficient translation and peptide-bond synthesis on native or reconstituted 70S ribosomes in vitro. Probably functions indirectly by altering the affinity of the ribosome for aminoacyl-tRNA, thus increasing their reactivity as acceptors for peptidyl transferase. The chain is Elongation factor P from Rhizobium johnstonii (strain DSM 114642 / LMG 32736 / 3841) (Rhizobium leguminosarum bv. viciae).